Consider the following 198-residue polypeptide: Recombination protein RecR (198 aa).

The segment at 57–72 adopts a C4-type zinc-finger fold; that stretch reads CSVCGHITENDPCYIC. The region spanning 80 to 175 is the Toprim domain; that stretch reads SVICVVEDDK…KVTRLAQGLS (96 aa).

The protein belongs to the RecR family.

Its function is as follows. May play a role in DNA repair. It seems to be involved in an RecBC-independent recombinational process of DNA repair. It may act with RecF and RecO. The chain is Recombination protein RecR from Staphylococcus haemolyticus (strain JCSC1435).